A 446-amino-acid polypeptide reads, in one-letter code: NAD kinase (446 aa).

Serine 46, serine 48, serine 50, serine 55, and serine 64 each carry phosphoserine.

This sequence belongs to the NAD kinase family. The cofactor is a divalent metal cation. In terms of tissue distribution, widely expressed but not detected in skeletal muscle.

The catalysed reaction is NAD(+) + ATP = ADP + NADP(+) + H(+). The chain is NAD kinase (NADK) from Homo sapiens (Human).